The chain runs to 376 residues: Chaperone protein DnaJ (376 aa).

The J domain occupies 4-68 (DYYEILGVAR…ETRARYDRFG (65 aa)). The interval 102–121 (GGMGGPTQQRRRGGPARGDD) is disordered. Residues 136-218 (GGEKEIRISH…CDGKGTNQVT (83 aa)) form a CR-type zinc finger. Residues C149, C152, C166, C169, C192, C195, C206, and C209 each coordinate Zn(2+). CXXCXGXG motif repeat units follow at residues 149-156 (CETCSGSG), 166-173 (CSTCSGSG), 192-199 (CPTCNGTG), and 206-213 (CDACDGKG).

This sequence belongs to the DnaJ family. As to quaternary structure, homodimer. The cofactor is Zn(2+).

The protein localises to the cytoplasm. Its function is as follows. Participates actively in the response to hyperosmotic and heat shock by preventing the aggregation of stress-denatured proteins and by disaggregating proteins, also in an autonomous, DnaK-independent fashion. Unfolded proteins bind initially to DnaJ; upon interaction with the DnaJ-bound protein, DnaK hydrolyzes its bound ATP, resulting in the formation of a stable complex. GrpE releases ADP from DnaK; ATP binding to DnaK triggers the release of the substrate protein, thus completing the reaction cycle. Several rounds of ATP-dependent interactions between DnaJ, DnaK and GrpE are required for fully efficient folding. Also involved, together with DnaK and GrpE, in the DNA replication of plasmids through activation of initiation proteins. This chain is Chaperone protein DnaJ, found in Trichormus variabilis (strain ATCC 29413 / PCC 7937) (Anabaena variabilis).